A 265-amino-acid chain; its full sequence is Small ribosomal subunit protein uS2 (265 aa).

The tract at residues 226–265 (AAAPNSASVREEEFSAESADEGKGRRAPAKKGDKKADAAE) is disordered. Positions 245–265 (DEGKGRRAPAKKGDKKADAAE) are enriched in basic and acidic residues.

It belongs to the universal ribosomal protein uS2 family.

The chain is Small ribosomal subunit protein uS2 from Xanthomonas euvesicatoria pv. vesicatoria (strain 85-10) (Xanthomonas campestris pv. vesicatoria).